Here is a 375-residue protein sequence, read N- to C-terminus: 23S rRNA (uracil(747)-C(5))-methyltransferase RlmC (375 aa).

Residues Cys-3, Cys-11, Cys-14, and Cys-87 each contribute to the [4Fe-4S] cluster site. The S-adenosyl-L-methionine site is built by Gln-212, Phe-241, Glu-262, and Asn-307. Cys-334 functions as the Nucleophile in the catalytic mechanism.

This sequence belongs to the class I-like SAM-binding methyltransferase superfamily. RNA M5U methyltransferase family. RlmC subfamily.

It catalyses the reaction uridine(747) in 23S rRNA + S-adenosyl-L-methionine = 5-methyluridine(747) in 23S rRNA + S-adenosyl-L-homocysteine + H(+). In terms of biological role, catalyzes the formation of 5-methyl-uridine at position 747 (m5U747) in 23S rRNA. This is 23S rRNA (uracil(747)-C(5))-methyltransferase RlmC from Escherichia coli O45:K1 (strain S88 / ExPEC).